We begin with the raw amino-acid sequence, 430 residues long: MNVKVENIEKNVVKLEITVDSEKFNEAVKKSFKKNAKRFNVPGFRKGKAPLNIIKKYYGEGVLFEDAINFCCEDTYPKAIEENNIKPVDYPQIDVVQIGEGKDFIYTAEVTTVPEVKLGEYKGVEVKKVSYEVEDEAVENELKSMQEKNARVSLKEEGEIEKGNIAIIDFKGYVDGKAFEGGEAKDYEIEIGSGTFIGDFEDQLVGLKKDESKEVNVSFPEEYGREDLNGKPATFEVTIKDIKVKELPALDDEFAKEVSEFDTLEELKSDIKDRMKKELSEKAKAEYEEAVVEAVGANAEIEIPKVMIEKEIENMVRDLEMRLKYQGLDLKSYYEFTNSSEEKVKEYMRETAEKRVKTDLIMQEIAKVEDIKATEEELKEKAMEVAKQYGQKDVEKTAELIANAQKAYLEIDIVNGKVLDLLVENSKEIA.

The PPIase FKBP-type domain occupies G163–P248.

It belongs to the FKBP-type PPIase family. Tig subfamily.

The protein localises to the cytoplasm. The enzyme catalyses [protein]-peptidylproline (omega=180) = [protein]-peptidylproline (omega=0). Its function is as follows. Involved in protein export. Acts as a chaperone by maintaining the newly synthesized protein in an open conformation. Functions as a peptidyl-prolyl cis-trans isomerase. The polypeptide is Trigger factor (Clostridium botulinum (strain Okra / Type B1)).